Reading from the N-terminus, the 601-residue chain is Rhizobactin siderophore biosynthesis protein RhbF (601 aa).

It belongs to the IucA/IucC family.

It functions in the pathway siderophore biosynthesis; rhizobactin biosynthesis. The protein is Rhizobactin siderophore biosynthesis protein RhbF (rhbF) of Rhizobium meliloti (strain 1021) (Ensifer meliloti).